The primary structure comprises 215 residues: Nascent polypeptide-associated complex subunit alpha (215 aa).

The interval 1 to 81 is disordered; sequence MPGEATETVP…SEKKARKAMS (81 aa). The span at 9–28 shows a compositional bias: polar residues; the sequence is VPATEQELPQPQAETGSGTE. The segment covering 29 to 40 has biased composition (acidic residues); that stretch reads SDSDESVPELEG. Position 43 is a phosphoserine; by ILK1 (Ser43). Low complexity predominate over residues 44-57; that stretch reads TQATTQQAQLAAAA. The interval 69-80 is required for DNA-binding; that stretch reads QSRSEKKARKAM. The 66-residue stretch at 70–135 folds into the NAC-A/B domain; sequence SRSEKKARKA…AKIEDLSQQA (66 aa). The RNA/DNA-binding stretch occupies residues 93–108; sequence RVTIRKSKNILFVITK. At Ser132 the chain carries Phosphoserine. Lys142 is modified (N6-acetyllysine; alternate). Lys142 participates in a covalent cross-link: Glycyl lysine isopeptide (Lys-Gly) (interchain with G-Cter in SUMO2); alternate. Thr159 is subject to Phosphothreonine; by GSK3-beta. Phosphothreonine is present on Thr161. Residues Ser166, Ser186, Ser191, and Ser203 each carry the phosphoserine modification. The UBA domain occupies 176-213; it reads VEVKDIEWVMSQANVSRAKAVRALKNNSNNIVNAIMEL.

It belongs to the NAC-alpha family. Part of the nascent polypeptide-associated complex (NAC), which is a heterodimer of NACA and BTF3 (via NAC-A/B domains). NAC associates with ribosomes through the BTF3/NACB subunit and contacts the ribosomal protein L23, which is positioned near the exiting site. Both subunits can contact nascent polypeptide chains. NACA may also form homodimers, and only this form binds DNA. Interacts with TBP and JUN. Phosphorylation of Ser-43 by ILK during cell adhesion may promote nuclear localization. Phosphorylation of Thr-159 by GSK3B may promote proteasome mediated degradation.

The protein resides in the cytoplasm. The protein localises to the nucleus. In terms of biological role, prevents inappropriate targeting of non-secretory polypeptides to the endoplasmic reticulum (ER). Binds to nascent polypeptide chains as they emerge from the ribosome and blocks their interaction with the signal recognition particle (SRP), which normally targets nascent secretory peptides to the ER. Also reduces the inherent affinity of ribosomes for protein translocation sites in the ER membrane (M sites). May act as a specific coactivator for JUN, binding to DNA and stabilizing the interaction of JUN homodimers with target gene promoters. This chain is Nascent polypeptide-associated complex subunit alpha, found in Chinchilla lanigera (Long-tailed chinchilla).